The primary structure comprises 318 residues: Cell growth regulator with EF hand domain protein 1 (318 aa).

A signal peptide spans 1 to 19 (MLPLTMTVLILLLLPTGQA). EF-hand domains are found at residues 69 to 104 (SREQ…ALAP) and 114 to 149 (PVIL…ALRH). The Ca(2+) site is built by Asp82, Asp84, Ser86, Gln88, Glu93, Asp127, Asn129, Asp131, and Glu138. Positions 177-318 (LRQETQEAPG…HIVQVENDEI (142 aa)) are disordered. 2 stretches are compositionally biased toward basic and acidic residues: residues 186 to 202 (GPRE…RESL) and 223 to 233 (GEAEGQAEAKG). Tandem repeats lie at residues 219-235 (PGPR…KGDA), 236-252 (PGPR…EGDA), and 253-269 (PGPR…EGDA). Residues 219–286 (PGPRGEAEGQ…GGQAEARENG (68 aa)) form a 4 X 17 AA approximate tandem repeats of P-G-P-R-G-E-A-G-G-Q-A-E-A-[KR]-G-D-A region. Over residues 235–272 (APGPRGEAGGQAEAEGDAPGPRGEAGGQAEAEGDAPGP) the composition is skewed to low complexity. A 4; approximate repeat occupies 270 to 286 (PGPRGEAGGQAEARENG). The segment covering 281-293 (EARENGEEAKELP) has biased composition (basic and acidic residues).

Probably digested extracellularly by an unknown serine protease generating extremely hydrophobic bioactive peptides.

The protein resides in the secreted. Functionally, mediates cell-cell adhesion in a calcium-dependent manner. Able to inhibit growth in several cell lines. In Homo sapiens (Human), this protein is Cell growth regulator with EF hand domain protein 1.